The sequence spans 229 residues: C-type lectin domain family 1 member B (229 aa).

At 1–33 (MQDEDGYITLNIKTRKPALISVGSASSSWWRVM) the chain is on the cytoplasmic side. Phosphotyrosine is present on Tyr7. Positions 7 to 10 (YITL) match the ITAM motif. Residues 34–54 (ALILLILCVGMVVGLVALGIW) form a helical; Signal-anchor for type II membrane protein membrane-spanning segment. Residues 55–229 (SVMQRNYLQG…AGMTKVDQLP (175 aa)) lie on the Extracellular side of the membrane. An N-linked (GlcNAc...) asparagine glycan is attached at Asn68. Cys102 and Cys113 are oxidised to a cystine. In terms of domain architecture, C-type lectin spans 109–217 (YGDSCYGFFR…CENKHYLMCE (109 aa)). Residues Asn120 and Asn134 are each glycosylated (N-linked (GlcNAc...) asparagine). Intrachain disulfides connect Cys130–Cys216 and Cys195–Cys208.

Homodimer. Interacts (via cytoplasmic domain) with RACK1; promotes CLEC1B ubiquitination and proteasome-mediated degradation. Interacts (dimer) with SYK (via SH2 domains). Interacts with PDPN; the interaction is independent of CLEC1B glycosylation and activates CLEC1B. Glycosylated. Post-translationally, phosphorylated on tyrosine residue in response to rhodocytin binding. In terms of tissue distribution, expressed preferentially in the liver. Also expressed in immune cells of myeloid origin and on the surface of platelets.

The protein resides in the membrane. C-type lectin-like receptor that functions as a platelet receptor for the lymphatic endothelial marker, PDPN. After ligand activation, signals via sequential activation of SRC and SYK tyrosine kinases leading to activation of PLCG2. In terms of biological role, (Microbial infection) Acts as a receptor for the platelet-aggregating snake venom protein rhodocytin. Rhodocytin binding leads to tyrosine phosphorylation and this promotes the binding of spleen tyrosine kinase (SYK) and initiation of downstream tyrosine phosphorylation events and activation of PLCG2. Functionally, (Microbial infection) Acts as an attachment factor for Human immunodeficiency virus type 1 (HIV-1) and facilitates its capture by platelets. This chain is C-type lectin domain family 1 member B (CLEC1B), found in Homo sapiens (Human).